Reading from the N-terminus, the 404-residue chain is Cysteine desulfurase IscS (404 aa).

Pyridoxal 5'-phosphate is bound by residues 75–76, asparagine 155, glutamine 183, and 203–205; these read AT and SGH. Lysine 206 is modified (N6-(pyridoxal phosphate)lysine). Threonine 243 is a binding site for pyridoxal 5'-phosphate. The Cysteine persulfide intermediate role is filled by cysteine 328. Cysteine 328 contributes to the [2Fe-2S] cluster binding site.

It belongs to the class-V pyridoxal-phosphate-dependent aminotransferase family. NifS/IscS subfamily. Homodimer. Forms a heterotetramer with IscU, interacts with other sulfur acceptors. It depends on pyridoxal 5'-phosphate as a cofactor.

It is found in the cytoplasm. It catalyses the reaction (sulfur carrier)-H + L-cysteine = (sulfur carrier)-SH + L-alanine. Its pathway is cofactor biosynthesis; iron-sulfur cluster biosynthesis. Functionally, master enzyme that delivers sulfur to a number of partners involved in Fe-S cluster assembly, tRNA modification or cofactor biosynthesis. Catalyzes the removal of elemental sulfur and selenium atoms from cysteine and selenocysteine to produce alanine. Functions as a sulfur delivery protein for Fe-S cluster synthesis onto IscU, an Fe-S scaffold assembly protein, as well as other S acceptor proteins. Also functions as a selenium delivery protein in the pathway for the biosynthesis of selenophosphate. In Salmonella paratyphi C (strain RKS4594), this protein is Cysteine desulfurase IscS.